We begin with the raw amino-acid sequence, 88 residues long: Small ribosomal subunit protein bS20 (88 aa).

Residues 69–88 (KNTASRKKSRLTKRFNKLTG) form a disordered region. Basic residues predominate over residues 71-88 (TASRKKSRLTKRFNKLTG).

Belongs to the bacterial ribosomal protein bS20 family.

Functionally, binds directly to 16S ribosomal RNA. This is Small ribosomal subunit protein bS20 from Pelotomaculum thermopropionicum (strain DSM 13744 / JCM 10971 / SI).